A 374-amino-acid polypeptide reads, in one-letter code: Homoserine O-succinyltransferase (374 aa).

One can recognise an AB hydrolase-1 domain in the interval 47 to 357 (NAILVCHALS…NFGHDSFLME (311 aa)). Serine 153 acts as the Nucleophile in catalysis. Arginine 223 lines the substrate pocket. Residues aspartate 318 and histidine 351 contribute to the active site. Aspartate 352 serves as a coordination point for substrate.

Belongs to the AB hydrolase superfamily. MetX family. Homodimer.

It localises to the cytoplasm. It catalyses the reaction L-homoserine + succinyl-CoA = O-succinyl-L-homoserine + CoA. Its pathway is amino-acid biosynthesis; L-methionine biosynthesis via de novo pathway; O-succinyl-L-homoserine from L-homoserine: step 1/1. In terms of biological role, transfers a succinyl group from succinyl-CoA to L-homoserine, forming succinyl-L-homoserine. This chain is Homoserine O-succinyltransferase, found in Dechloromonas aromatica (strain RCB).